Reading from the N-terminus, the 152-residue chain is Ribonuclease H (152 aa).

Residues 4 to 145 (SRSMVEIFSD…CDELARQAIA (142 aa)) enclose the RNase H type-1 domain. Mg(2+) is bound by residues Asp-13, Glu-51, Asp-73, and Asp-137.

Belongs to the RNase H family. Monomer. Requires Mg(2+) as cofactor.

It localises to the cytoplasm. The enzyme catalyses Endonucleolytic cleavage to 5'-phosphomonoester.. In terms of biological role, endonuclease that specifically degrades the RNA of RNA-DNA hybrids. The protein is Ribonuclease H of Syntrophotalea carbinolica (strain DSM 2380 / NBRC 103641 / GraBd1) (Pelobacter carbinolicus).